Consider the following 685-residue polypeptide: UvrABC system protein B (685 aa).

The Helicase ATP-binding domain maps to E39 to V420. An ATP-binding site is contributed by G52–T59. The Beta-hairpin motif lies at Y105–I128. Residues Q443 to I596 enclose the Helicase C-terminal domain. The region spanning A640–R675 is the UVR domain.

Belongs to the UvrB family. In terms of assembly, forms a heterotetramer with UvrA during the search for lesions. Interacts with UvrC in an incision complex.

It localises to the cytoplasm. Functionally, the UvrABC repair system catalyzes the recognition and processing of DNA lesions. A damage recognition complex composed of 2 UvrA and 2 UvrB subunits scans DNA for abnormalities. Upon binding of the UvrA(2)B(2) complex to a putative damaged site, the DNA wraps around one UvrB monomer. DNA wrap is dependent on ATP binding by UvrB and probably causes local melting of the DNA helix, facilitating insertion of UvrB beta-hairpin between the DNA strands. Then UvrB probes one DNA strand for the presence of a lesion. If a lesion is found the UvrA subunits dissociate and the UvrB-DNA preincision complex is formed. This complex is subsequently bound by UvrC and the second UvrB is released. If no lesion is found, the DNA wraps around the other UvrB subunit that will check the other stand for damage. The sequence is that of UvrABC system protein B from Aromatoleum aromaticum (strain DSM 19018 / LMG 30748 / EbN1) (Azoarcus sp. (strain EbN1)).